Consider the following 202-residue polypeptide: LexA repressor (202 aa).

The segment at residues 29-49 (VREICEATGLKSTSTVHGHLT) is a DNA-binding region (H-T-H motif). Active-site for autocatalytic cleavage activity residues include Ser-126 and Lys-163.

It belongs to the peptidase S24 family. In terms of assembly, homodimer.

It carries out the reaction Hydrolysis of Ala-|-Gly bond in repressor LexA.. Its function is as follows. Represses a number of genes involved in the response to DNA damage (SOS response), including recA and lexA. In the presence of single-stranded DNA, RecA interacts with LexA causing an autocatalytic cleavage which disrupts the DNA-binding part of LexA, leading to derepression of the SOS regulon and eventually DNA repair. The chain is LexA repressor from Caldicellulosiruptor saccharolyticus (strain ATCC 43494 / DSM 8903 / Tp8T 6331).